The primary structure comprises 271 residues: S-adenosylmethionine decarboxylase proenzyme (271 aa).

Residue S121 is the Schiff-base intermediate with substrate; via pyruvic acid of the active site. S121 carries the post-translational modification Pyruvic acid (Ser); by autocatalysis. The active-site Proton acceptor; for processing activity is H126. The active-site Proton donor; for catalytic activity is the C149.

This sequence belongs to the prokaryotic AdoMetDC family. Type 2 subfamily. In terms of assembly, heterooctamer of four alpha and four beta chains arranged as a tetramer of alpha/beta heterodimers. It depends on pyruvate as a cofactor. In terms of processing, is synthesized initially as an inactive proenzyme. Formation of the active enzyme involves a self-maturation process in which the active site pyruvoyl group is generated from an internal serine residue via an autocatalytic post-translational modification. Two non-identical subunits are generated from the proenzyme in this reaction, and the pyruvate is formed at the N-terminus of the alpha chain, which is derived from the carboxyl end of the proenzyme. The post-translation cleavage follows an unusual pathway, termed non-hydrolytic serinolysis, in which the side chain hydroxyl group of the serine supplies its oxygen atom to form the C-terminus of the beta chain, while the remainder of the serine residue undergoes an oxidative deamination to produce ammonia and the pyruvoyl group blocking the N-terminus of the alpha chain.

The enzyme catalyses S-adenosyl-L-methionine + H(+) = S-adenosyl 3-(methylsulfanyl)propylamine + CO2. Its pathway is amine and polyamine biosynthesis; S-adenosylmethioninamine biosynthesis; S-adenosylmethioninamine from S-adenosyl-L-methionine: step 1/1. Functionally, catalyzes the decarboxylation of S-adenosylmethionine to S-adenosylmethioninamine (dcAdoMet), the propylamine donor required for the synthesis of the polyamines spermine and spermidine from the diamine putrescine. The chain is S-adenosylmethionine decarboxylase proenzyme from Clostridium beijerinckii (strain ATCC 51743 / NCIMB 8052) (Clostridium acetobutylicum).